A 383-amino-acid polypeptide reads, in one-letter code: Smad nuclear-interacting protein 1 (383 aa).

Positions Met1–Arg10 are enriched in basic and acidic residues. The segment at Met1–Glu209 is disordered. Residue Ser18 is modified to Phosphoserine. A Glycyl lysine isopeptide (Lys-Gly) (interchain with G-Cter in SUMO); alternate cross-link involves residue Lys28. Residue Lys28 forms a Glycyl lysine isopeptide (Lys-Gly) (interchain with G-Cter in SUMO1); alternate linkage. Residue Lys28 forms a Glycyl lysine isopeptide (Lys-Gly) (interchain with G-Cter in SUMO2); alternate linkage. A compositionally biased stretch (basic and acidic residues) spans Lys28–Asp43. A phosphoserine mark is found at Ser33, Ser48, and Ser50. The segment covering Ala44–Pro56 has biased composition (low complexity). Basic residues predominate over residues Ser59–Gln90. Ser91 is modified (phosphoserine). Composition is skewed to basic and acidic residues over residues Val99–Arg134 and Arg143–Ser159. Lys100 participates in a covalent cross-link: Glycyl lysine isopeptide (Lys-Gly) (interchain with G-Cter in SUMO2). Position 145 is a phosphoserine (Ser145). The stretch at Gln153–Ile194 forms a coiled coil. A Glycyl lysine isopeptide (Lys-Gly) (interchain with G-Cter in SUMO2) cross-link involves residue Lys210. The 64-residue stretch at Tyr268 to Ile331 folds into the FHA domain. Positions Glu359–Lys369 are enriched in basic and acidic residues. Residues Glu359 to Ser383 are disordered. Residues Glu370–Ser383 are compositionally biased toward acidic residues. Ser381 carries the phosphoserine modification.

As to quaternary structure, component of activated spliceosome complexes. Binds SMAD4 and CREBBP/EP300. Component of the minor spliceosome, which splices U12-type introns. Binds the SMAD1/OAZ1/PSMB4 complex. Interacts with DROSHA and SMARCA4. Component of the SNARP complex which consists at least of SNIP1, SNW1, THRAP3, BCLAF1 and PNN. Post-translationally, degraded by the proteasome upon binding to the SMAD1/OAZ1/PSMB4 complex.

Its subcellular location is the nucleus. Functionally, required for pre-mRNA splicing as component of the spliceosome. As a component of the minor spliceosome, involved in the splicing of U12-type introns in pre-mRNAs. Down-regulates NF-kappa-B signaling by competing with RELA for CREBBP/EP300 binding. Involved in the microRNA (miRNA) biogenesis. May be involved in cyclin-D1/CCND1 mRNA stability through the SNARP complex which associates with both the 3'end of the CCND1 gene and its mRNA. The polypeptide is Smad nuclear-interacting protein 1 (Snip1) (Mus musculus (Mouse)).